We begin with the raw amino-acid sequence, 368 residues long: Homoserine O-acetyltransferase (368 aa).

The AB hydrolase-1 domain maps to 41-352; the sequence is NVILITHALS…DYGHDSFLVE (312 aa). Ser147 acts as the Nucleophile in catalysis. Residue Arg219 participates in substrate binding. Active-site residues include Asp313 and His346. Position 347 (Asp347) interacts with substrate.

It belongs to the AB hydrolase superfamily. MetX family. In terms of assembly, homodimer.

Its subcellular location is the cytoplasm. It carries out the reaction L-homoserine + acetyl-CoA = O-acetyl-L-homoserine + CoA. It participates in amino-acid biosynthesis; L-methionine biosynthesis via de novo pathway; O-acetyl-L-homoserine from L-homoserine: step 1/1. Functionally, transfers an acetyl group from acetyl-CoA to L-homoserine, forming acetyl-L-homoserine. The chain is Homoserine O-acetyltransferase from Nautilia profundicola (strain ATCC BAA-1463 / DSM 18972 / AmH).